A 121-amino-acid polypeptide reads, in one-letter code: NAD(P)H-quinone oxidoreductase subunit M (121 aa).

Belongs to the complex I NdhM subunit family. NDH-1 can be composed of about 15 different subunits; different subcomplexes with different compositions have been identified which probably have different functions.

It localises to the cellular thylakoid membrane. The catalysed reaction is a plastoquinone + NADH + (n+1) H(+)(in) = a plastoquinol + NAD(+) + n H(+)(out). It carries out the reaction a plastoquinone + NADPH + (n+1) H(+)(in) = a plastoquinol + NADP(+) + n H(+)(out). Its function is as follows. NDH-1 shuttles electrons from an unknown electron donor, via FMN and iron-sulfur (Fe-S) centers, to quinones in the respiratory and/or the photosynthetic chain. The immediate electron acceptor for the enzyme in this species is believed to be plastoquinone. Couples the redox reaction to proton translocation, and thus conserves the redox energy in a proton gradient. Cyanobacterial NDH-1 also plays a role in inorganic carbon-concentration. In Nostoc punctiforme (strain ATCC 29133 / PCC 73102), this protein is NAD(P)H-quinone oxidoreductase subunit M.